The sequence spans 1491 residues: Pleckstrin homology domain-containing family H member 2 (1491 aa).

Positions 19-177 form a coiled coil; that stretch reads ALEAQLMKFR…ELQEKKISCV (159 aa). Disordered stretches follow at residues 232-435, 506-546, and 612-668; these read AEKP…PFQP, DDGL…LHRF, and SSSP…SDYA. Polar residues predominate over residues 253-264; sequence TSCSSEQNQKTR. Over residues 374-385 the composition is skewed to basic and acidic residues; the sequence is KEQDSSSDELNK. Over residues 392 to 406 the composition is skewed to polar residues; the sequence is LDYTSSSSEANTPSP. Low complexity predominate over residues 657 to 666; that stretch reads SDSSAASESD. PH domains lie at 702 to 796 and 810 to 918; these read PLEK…SVLR and KPAV…VAAG. In terms of domain architecture, MyTH4 spans 954-1109; it reads HSKEGILSPL…PSRMEILSTL (156 aa). An FERM domain is found at 1120-1449; sequence FSIPVHFMNG…SYINSFHQQK (330 aa). A disordered region spans residues 1466 to 1491; sequence QAPQARVMGSQPPLSNSRPTKGPTLL.

As to quaternary structure, self-associates. Interacts with TGFB1I1. As to expression, expressed in the kidney and testis. Expressed in the kidney exclusively by glomerular podocytes.

The protein localises to the cytoplasm. It is found in the cytoskeleton. Its subcellular location is the cell membrane. It localises to the cell projection. The protein resides in the lamellipodium. In terms of biological role, in the kidney glomerulus may play a role in linking podocyte foot processes to the glomerular basement membrane. May be involved in stabilization of F-actin by attenuating its depolymerization. Can recruit TGFB1I1 from focal adhesions to podocyte lamellipodia. The protein is Pleckstrin homology domain-containing family H member 2 (Plekhh2) of Mus musculus (Mouse).